The chain runs to 236 residues: Leucyl/phenylalanyl-tRNA--protein transferase (236 aa).

The protein belongs to the L/F-transferase family.

It localises to the cytoplasm. The enzyme catalyses N-terminal L-lysyl-[protein] + L-leucyl-tRNA(Leu) = N-terminal L-leucyl-L-lysyl-[protein] + tRNA(Leu) + H(+). The catalysed reaction is N-terminal L-arginyl-[protein] + L-leucyl-tRNA(Leu) = N-terminal L-leucyl-L-arginyl-[protein] + tRNA(Leu) + H(+). It carries out the reaction L-phenylalanyl-tRNA(Phe) + an N-terminal L-alpha-aminoacyl-[protein] = an N-terminal L-phenylalanyl-L-alpha-aminoacyl-[protein] + tRNA(Phe). Its function is as follows. Functions in the N-end rule pathway of protein degradation where it conjugates Leu, Phe and, less efficiently, Met from aminoacyl-tRNAs to the N-termini of proteins containing an N-terminal arginine or lysine. The chain is Leucyl/phenylalanyl-tRNA--protein transferase from Vibrio parahaemolyticus serotype O3:K6 (strain RIMD 2210633).